We begin with the raw amino-acid sequence, 203 residues long: MARYTGPRDKVSRRFGVALFGSTKALEKRPFPPGQHGMRAGRKKKSDYGVMLAEKQKLRFQYGVLEGQFRKYYAEAARRRGITGDILLQLLELRLDNVVYRLGFSNTRAGARQLVSHGHITVNGKKTNIASYSCRPGDVIAVGGKASSQQLVTRFLDLTQATVVPDWLECDRDKLTGKIARVPSKEEIAPIVNEQLIVEFYSR.

An S4 RNA-binding domain is found at 93-158 (LRLDNVVYRL…QQLVTRFLDL (66 aa)).

Belongs to the universal ribosomal protein uS4 family. In terms of assembly, part of the 30S ribosomal subunit. Contacts protein S5. The interaction surface between S4 and S5 is involved in control of translational fidelity.

Functionally, one of the primary rRNA binding proteins, it binds directly to 16S rRNA where it nucleates assembly of the body of the 30S subunit. With S5 and S12 plays an important role in translational accuracy. This chain is Small ribosomal subunit protein uS4, found in Akkermansia muciniphila (strain ATCC BAA-835 / DSM 22959 / JCM 33894 / BCRC 81048 / CCUG 64013 / CIP 107961 / Muc).